Reading from the N-terminus, the 255-residue chain is Urease accessory protein UreD 1 (255 aa).

Belongs to the UreD family. UreD, UreF and UreG form a complex that acts as a GTP-hydrolysis-dependent molecular chaperone, activating the urease apoprotein by helping to assemble the nickel containing metallocenter of UreC. The UreE protein probably delivers the nickel.

It localises to the cytoplasm. Functionally, required for maturation of urease via the functional incorporation of the urease nickel metallocenter. In Streptomyces griseus subsp. griseus (strain JCM 4626 / CBS 651.72 / NBRC 13350 / KCC S-0626 / ISP 5235), this protein is Urease accessory protein UreD 1.